A 217-amino-acid polypeptide reads, in one-letter code: Non-structural protein NS3 (217 aa).

Belongs to the orbivirus NS3 family.

In terms of biological role, may play a role in the release of virions from infected cells. This is Non-structural protein NS3 (Segment-10) from African horse sickness virus 9 (AHSV-9).